The chain runs to 175 residues: Keratin-associated protein 13-2 (175 aa).

Repeat copies occupy residues 46–55 (CQLGSSLYRG), 56–65 (CQEICWEPTS), 66–75 (CQTSYVESSP), 76–85 (CQTSCYRPRT), and 92–101 (CKTTYSGSLG). Positions 46 to 101 (CQLGSSLYRGCQEICWEPTSCQTSYVESSPCQTSCYRPRTSLLCSPCKTTYSGSLG) are 5 X 10 AA approximate repeats.

This sequence belongs to the PMG family. Interacts with hair keratins.

In the hair cortex, hair keratin intermediate filaments are embedded in an interfilamentous matrix, consisting of hair keratin-associated proteins (KRTAP), which are essential for the formation of a rigid and resistant hair shaft through their extensive disulfide bond cross-linking with abundant cysteine residues of hair keratins. The matrix proteins include the high-sulfur and high-glycine-tyrosine keratins. This Homo sapiens (Human) protein is Keratin-associated protein 13-2 (KRTAP13-2).